The following is a 358-amino-acid chain: UDP-N-acetylglucosamine--N-acetylmuramyl-(pentapeptide) pyrophosphoryl-undecaprenol N-acetylglucosamine transferase (358 aa).

Residues 11 to 13 (TGG), Asn-120, Arg-161, Ser-188, and Gln-282 each bind UDP-N-acetyl-alpha-D-glucosamine.

This sequence belongs to the glycosyltransferase 28 family. MurG subfamily.

It is found in the cell inner membrane. It catalyses the reaction di-trans,octa-cis-undecaprenyl diphospho-N-acetyl-alpha-D-muramoyl-L-alanyl-D-glutamyl-meso-2,6-diaminopimeloyl-D-alanyl-D-alanine + UDP-N-acetyl-alpha-D-glucosamine = di-trans,octa-cis-undecaprenyl diphospho-[N-acetyl-alpha-D-glucosaminyl-(1-&gt;4)]-N-acetyl-alpha-D-muramoyl-L-alanyl-D-glutamyl-meso-2,6-diaminopimeloyl-D-alanyl-D-alanine + UDP + H(+). Its pathway is cell wall biogenesis; peptidoglycan biosynthesis. Cell wall formation. Catalyzes the transfer of a GlcNAc subunit on undecaprenyl-pyrophosphoryl-MurNAc-pentapeptide (lipid intermediate I) to form undecaprenyl-pyrophosphoryl-MurNAc-(pentapeptide)GlcNAc (lipid intermediate II). In Synechococcus sp. (strain CC9902), this protein is UDP-N-acetylglucosamine--N-acetylmuramyl-(pentapeptide) pyrophosphoryl-undecaprenol N-acetylglucosamine transferase.